The following is a 34-amino-acid chain: Sarcoplasmic/endoplasmic reticulum calcium ATPase regulator DWORF (34 aa).

The chain crosses the membrane as a helical span at residues 12-32 (IVPILLLVGWIVGCIIVIYIV).

In terms of assembly, homooligomer. Can also form heterooligomers with other sarcoplasmic/endoplasmic reticulum calcium ATPase (SERCA) regulators ARLN, ERLN, PLN and SLN. Monomer. Interacts with ATP2A1/SERCA1; the interaction results in activation of ATP2A1. Interacts as a monomer with ATP2A2/SERCA2; the interaction results in activation of ATP2A2. In terms of tissue distribution, highly expressed in heart (at protein level). Detected in heart and soleus, a postural muscle group of the hindlimb containing the highest enrichment of slow-twitch muscle fibers. Also expressed in diaphragm, which contains some slow-twitch fibers. Not detected in the quadriceps, a fast-twitch muscle group, or in cardiac atrial muscle. Not expressed in the prenatal heart but gradually increases in abundance postnatally.

Its subcellular location is the sarcoplasmic reticulum membrane. In terms of biological role, enhances the activity of ATP2A1/SERCA1 ATPase in sarcoplasmic reticulum by displacing ATP2A1/SERCA1 inhibitors, thereby acting as a key regulator of skeletal muscle activity. Also enhances the activity of the ATP2A2/SERCA2 ATPase. Does not directly stimulate SERCA pump activity. Binds preferentially to the phosphorylated E1 and E2 conformational forms of ATP2A2 which predominate at high Ca(2+) concentrations during the systolic phase of the cardiac cycle. Competes with ATP2A2 inhibitor phospholamban (PLN) for binding to ATP2A2 and displaces PLN. Can activate ATP2A2 directly in the absence of PLN. Also enhances sarcoplasmic reticulum Ca(2+) uptake and myocyte contractility by displacing the SERCA inhibitory peptides sarcolipin (SLN) and myoregulin (MRLN). The chain is Sarcoplasmic/endoplasmic reticulum calcium ATPase regulator DWORF from Mus musculus (Mouse).